A 198-amino-acid chain; its full sequence is Mediator of RNA polymerase II transcription subunit 20 (198 aa).

Belongs to the Mediator complex subunit 20 family. As to quaternary structure, component of the Mediator complex.

The protein localises to the nucleus. Its function is as follows. Component of the Mediator complex, a coactivator involved in the regulated transcription of nearly all RNA polymerase II-dependent genes. Mediator functions as a bridge to convey information from gene-specific regulatory proteins to the basal RNA polymerase II transcription machinery. Mediator is recruited to promoters by direct interactions with regulatory proteins and serves as a scaffold for the assembly of a functional preinitiation complex with RNA polymerase II and the general transcription factors. This Caenorhabditis briggsae protein is Mediator of RNA polymerase II transcription subunit 20 (mdt-20).